Here is a 204-residue protein sequence, read N- to C-terminus: Ras-related protein RabQ (204 aa).

12–19 (GPPFVGKS) is a binding site for GTP. The Effector region motif lies at 34–42 (MDTTIGVEF). GTP is bound by residues 60 to 64 (DTAGQ) and 118 to 121 (NKCD). 2 S-geranylgeranyl cysteine lipidation sites follow: C202 and C203.

This sequence belongs to the small GTPase superfamily. Rab family.

The protein resides in the cell membrane. This Dictyostelium discoideum (Social amoeba) protein is Ras-related protein RabQ (rabQ).